Consider the following 239-residue polypeptide: Large ribosomal subunit protein bL25 (239 aa).

Positions 211-239 are disordered; sequence KGKKDKEDEEAEKGTSVASPTTATGGTKK. Over residues 226–239 the composition is skewed to polar residues; the sequence is SVASPTTATGGTKK.

This sequence belongs to the bacterial ribosomal protein bL25 family. CTC subfamily. As to quaternary structure, part of the 50S ribosomal subunit; part of the 5S rRNA/L5/L18/L25 subcomplex. Contacts the 5S rRNA. Binds to the 5S rRNA independently of L5 and L18.

In terms of biological role, this is one of the proteins that binds to the 5S RNA in the ribosome where it forms part of the central protuberance. The chain is Large ribosomal subunit protein bL25 from Endomicrobium trichonymphae.